The primary structure comprises 421 residues: MHRFFKSEFFNFEFIRILSAAPYGGAEIAECLVAAGQITNDDPESWHRAWIIQADKAKALGDEALHSGDTVSARRAYLRASNYYRASGYMFHDRPGAPDARVLPLAQQVLDTYALTLPLLDTGEASQLKIPFENHQLAAYLYLPRDRTKPVPVLLSLGGADSIQEELYYVYAASGPQLGYAVLTFEGPGQGITLRRDKMHMRPDWEVVVGRVLDFLTAYMQQNPSVQLDLSRVAVVGASMGGYYALRAAADPRIGACVSIDPFYDMWDFVRNHVSPALLNAWNAGWVPSRVVNGIMSMAMAASFQAKWEVGLAMWFFGVDSPTQTLRHMMKYTLARADGTSRLDQVKCPVLVSGATQSLYLEPESDVLRVFDALAHLGDERREIWIARSPEEGGLQAKIGAIGLVVQRTFRFLDQHLNVTR.

The active-site Nucleophile is S239.

The protein belongs to the AB hydrolase superfamily. FUS2 hydrolase family. Homodimer.

It participates in secondary metabolite biosynthesis. Hydrolyase; part of the gene cluster that mediates the biosynthesis of oxaleimides, cytotoxic compounds containing an unusual disubstituted succinimide moiety. The first step of the pathway is provided by the HR-PKS poxF that serves in a new mode of collaborative biosynthesis with the PKS-NRPS poxE, by providing the olefin containing amino acid substrate via the synthesis of an ACP-bound dec-4-enoate. The cytochrome P450 monooxygenase poxM-catalyzed oxidation at the alpha-position creates the enzyme-bound 2-hydroxydec-4-enoyl-ACP thioester, which may be prone to spontaneous hydrolysis to yield 2-hydroxydec-4-enoic acid due to increased electrophilicity of the carbonyl. 2-hydroxydec-4-enoic acid can then be further oxidized by poxM to yield the alpha-ketoacid 2-oxodec-4-enoicacid, which is reductively aminated by the aminotransferase poxL to yield (S,E)-2-aminodec-4-enoic acid. The Hybrid PKS-NRPS synthetase poxE then performs condensation between the octaketide product of its PKS modules and the amino group of (S,E)-2-aminodec-4-enoic acid which is activated and incorporated by the adenylation domain. The resulting aminoacyl product can be cyclized by the Diels-Alderase PoxQ and reductively released by the reductive (R) domain of poxE to yield an aldehyde intermediate. The released aldehyde is then substrate for a Knoevenagel condensation by the hydrolyase poxO followed by an oxidation at the 5-position of the pyrrolidone ring. The presence of the olefin from the amino acid building block allows for migration of the substituted allyl group to occur. This allylic transposition reaction takes place in a conjugate addition, semipinacol-like fashion to yield a succinimide intermediate. Iterative two-electron oxidations of the C7 methyl of the succinimide intermediate to the carboxylic acid can be catalyzed by one of two remaining cytochrome P450 monooxygenasess poxC or poxD to yield oxaleimide A. Subsequent oxidation yields the maleimide scaffold oxaleimide I. Both oxaleimide A and oxaleimide I can undergo oxidative modifications in the decalin ring to yield the series of products oxaleimides B to H. The sequence is that of Hydrolyase poxO from Penicillium oxalicum.